The following is a 356-amino-acid chain: S-adenosylmethionine:tRNA ribosyltransferase-isomerase (356 aa).

It belongs to the QueA family. As to quaternary structure, monomer.

It is found in the cytoplasm. The catalysed reaction is 7-aminomethyl-7-carbaguanosine(34) in tRNA + S-adenosyl-L-methionine = epoxyqueuosine(34) in tRNA + adenine + L-methionine + 2 H(+). The protein operates within tRNA modification; tRNA-queuosine biosynthesis. Transfers and isomerizes the ribose moiety from AdoMet to the 7-aminomethyl group of 7-deazaguanine (preQ1-tRNA) to give epoxyqueuosine (oQ-tRNA). The polypeptide is S-adenosylmethionine:tRNA ribosyltransferase-isomerase (Chromohalobacter salexigens (strain ATCC BAA-138 / DSM 3043 / CIP 106854 / NCIMB 13768 / 1H11)).